The chain runs to 365 residues: Mannose-1-phosphate guanylyltransferase catalytic subunit beta (365 aa).

Residues 2 to 221 (KALILVGGYG…PGFWMDVGQP (220 aa)) form a substrate-binding domain region. Asp109 serves as a coordination point for GDP-alpha-D-mannose. Residue Asp109 coordinates Mg(2+). The active site involves Lys161. Asp217 is a binding site for GDP-alpha-D-mannose. Asp217 provides a ligand contact to Mg(2+). Residues 244-365 (ETGSNIHPTA…VNVPSKDIIM (122 aa)) are hexapeptide repeat domain.

It belongs to the transferase hexapeptide repeat family. As to quaternary structure, component of the GMPPA-GMPPB mannose-1-phosphate guanylyltransferase complex composed of 4 GMPPA subunits and 8 tag-335/GMPPB subunits; the complex is organized into three layers, a central layer made up of 2 GMPPA dimers sandwiched between two layers each made up of 2 tag-335/GMPPB dimers. Catalytic activity of tag-335/GMPPB is reduced when part of the complex and binding of GDP-alpha-D-Mannose by GMPPA induces allosteric feedback inhibition of tag-335/GMPPB. It depends on Mg(2+) as a cofactor.

It carries out the reaction alpha-D-mannose 1-phosphate + GTP + H(+) = GDP-alpha-D-mannose + diphosphate. It functions in the pathway nucleotide-sugar biosynthesis; GDP-alpha-D-mannose biosynthesis; GDP-alpha-D-mannose from alpha-D-mannose 1-phosphate (GTP route): step 1/1. With respect to regulation, enzyme activity is reduced by incorporation into the GMPPA-GMPPB mannose-1-phosphate guanylyltransferase complex. Allosterically inhibited, when part of the GMPPA-GMPPB complex, by GDP-alpha-D-mannose binding to GMPPA. Catalytic subunit of the GMPPA-GMPPB mannose-1-phosphate guanylyltransferase complex. Catalyzes the formation of GDP-mannose, an essential precursor of glycan moieties of glycoproteins and glycolipids. Can catalyze the reverse reaction in vitro. Together with GMPPA regulates GDP-alpha-D-mannose levels. This is Mannose-1-phosphate guanylyltransferase catalytic subunit beta (tag-335) from Caenorhabditis elegans.